The following is a 215-amino-acid chain: Nascent polypeptide-associated complex subunit alpha (215 aa).

Residues 1–81 form a disordered region; the sequence is MPGEATETVP…SEKKARKAMS (81 aa). The segment covering 9-21 has biased composition (polar residues); that stretch reads VPVTEQEMQQPQV. Residues 29–42 are compositionally biased toward acidic residues; that stretch reads SDSDDSVPELEEQD. The segment covering 43–57 has biased composition (low complexity); it reads SAQTQTQQAQLAAAA. One can recognise an NAC-A/B domain in the interval 70–135; sequence SRSEKKARKA…AKIEDLSQQA (66 aa). The 38-residue stretch at 176–213 folds into the UBA domain; the sequence is VEVKDIELVMSQANVSRAKAVRALKNNNNDIVNAIMEL.

The protein belongs to the NAC-alpha family.

Its function is as follows. May promote appropriate targeting of ribosome-nascent polypeptide complexes. The polypeptide is Nascent polypeptide-associated complex subunit alpha (naca) (Oreochromis niloticus (Nile tilapia)).